A 561-amino-acid polypeptide reads, in one-letter code: Asparagine synthetase [glutamine-hydrolyzing] (561 aa).

Cys2 serves as the catalytic For GATase activity. The 190-residue stretch at 2–191 folds into the Glutamine amidotransferase type-2 domain; the sequence is CGIWALFGSD…PGHYEVLDLK (190 aa). Residues 49-53, 75-77, and Asp97 each bind L-glutamine; these read RLAVV and NGE. The Asparagine synthetase domain occupies 213–536; that stretch reads HAIYDSVEKL…PGRADWLTHY (324 aa). Residues Leu256, Ile288, and 363-364 contribute to the ATP site; that span reads SG. Residue Lys385 is modified to N6-acetyllysine. Thr545 bears the Phosphothreonine mark. Residue Ser557 is modified to Phosphoserine.

It catalyses the reaction L-aspartate + L-glutamine + ATP + H2O = L-asparagine + L-glutamate + AMP + diphosphate + H(+). The protein operates within amino-acid biosynthesis; L-asparagine biosynthesis; L-asparagine from L-aspartate (L-Gln route): step 1/1. In Rattus norvegicus (Rat), this protein is Asparagine synthetase [glutamine-hydrolyzing] (Asns).